Reading from the N-terminus, the 668-residue chain is Macrolide export ATP-binding/permease protein MacB 1/2 (668 aa).

An ABC transporter domain is found at 9–247 (IRLRGVGREY…PGPGPAQAPQ (239 aa)). An ATP-binding site is contributed by 45–52 (GASGSGKS). Residues 230 to 257 (RTGAPAADPGPGPAQAPQPAPQPAPVQA) form a disordered region. Pro residues predominate over residues 237–255 (DPGPGPAQAPQPAPQPAPV). 4 consecutive transmembrane segments (helical) span residues 294-314 (FLTMLGIIIGIASVVSVVALG), 541-561 (LALLIAAIAVISLVVGGIGVM), 598-618 (LVCVIGGIAGILAALGFGLAF), and 634-654 (MLAALASACAIGLAFGYLPAV).

Belongs to the ABC transporter superfamily. Macrolide exporter (TC 3.A.1.122) family. Homodimer.

The protein resides in the cell inner membrane. In terms of biological role, non-canonical ABC transporter that contains transmembrane domains (TMD), which form a pore in the inner membrane, and an ATP-binding domain (NBD), which is responsible for energy generation. Confers resistance against macrolides. The sequence is that of Macrolide export ATP-binding/permease protein MacB 1/2 from Paracoccus denitrificans (strain Pd 1222).